A 304-amino-acid polypeptide reads, in one-letter code: Non-specific ribonucleoside hydrolase RihC (304 aa).

Residue histidine 233 is part of the active site.

This sequence belongs to the IUNH family. RihC subfamily.

Functionally, hydrolyzes both purine and pyrimidine ribonucleosides with a broad-substrate specificity. This chain is Non-specific ribonucleoside hydrolase RihC, found in Escherichia coli O17:K52:H18 (strain UMN026 / ExPEC).